The following is a 784-amino-acid chain: Protein Skeletor, isoforms B/C (784 aa).

The first 28 residues, 1-28 (MLAMKDKPWLLLFGLLAALSCLASFGDA), serve as a signal peptide directing secretion. DM13 domains are found at residues 34 to 143 (GTKI…VSIP) and 151 to 258 (PQKI…VRLP). The 133-residue stretch at 287-419 (LAFEVRWAVA…GAESVVWAIG (133 aa)) folds into the DOMON domain. A disordered region spans residues 451-491 (PLPEGARGNSNSSEQEDSAPAAQSSTGGAGYPPAGRPNVEP).

Interacts with Chro and Mgtor as part of a macromolecular complex forming the spindle matrix. Chro colocalizes with Skeletor (Skel) on the chromosomes at interphase and on spindle during metaphase.

Its subcellular location is the cytoplasm. It localises to the cytoskeleton. The protein localises to the spindle. The protein resides in the nucleus. It is found in the nucleolus. Its subcellular location is the chromosome. Its function is as follows. Provides structural support to stabilize and organize the microtubule spindle during mitosis (within embryonic somatic cells) and meiosis (within spermatocytes). The role in mitosis regulation depends on the Ran pathway. This Drosophila melanogaster (Fruit fly) protein is Protein Skeletor, isoforms B/C.